The following is a 322-amino-acid chain: Serine/threonine-protein phosphatase PP1 isozyme 6 (322 aa).

Position 1 is an N-acetylmethionine (M1). Residues D61, H63, D89, and N121 each coordinate Mn(2+). Catalysis depends on H122, which acts as the Proton donor. Mn(2+)-binding residues include H170 and H245. The disordered stretch occupies residues 303 to 322 (GFNNNVPRPGTPPHKGGKGR).

Belongs to the PPP phosphatase family. PP-1 subfamily. Mn(2+) serves as cofactor. In terms of tissue distribution, strongly up-regulated within developing flowers, especially in the tapetum, the developing and mature pollen and in the ovaries.

Its subcellular location is the nucleus. It is found in the cytoplasm. The enzyme catalyses O-phospho-L-seryl-[protein] + H2O = L-seryl-[protein] + phosphate. It carries out the reaction O-phospho-L-threonyl-[protein] + H2O = L-threonyl-[protein] + phosphate. With respect to regulation, phosphatase activity is strongly reduced by the protein phosphatase inhibitor 2 (I-2). Functionally, serine/threonine-protein phosphatase that possesses phosphatase activity toward para-nitrophenyl phosphate (pNPP) in vitro. This Arabidopsis thaliana (Mouse-ear cress) protein is Serine/threonine-protein phosphatase PP1 isozyme 6.